Reading from the N-terminus, the 302-residue chain is Glycine--tRNA ligase alpha subunit (302 aa).

It belongs to the class-II aminoacyl-tRNA synthetase family. In terms of assembly, tetramer of two alpha and two beta subunits.

It localises to the cytoplasm. It catalyses the reaction tRNA(Gly) + glycine + ATP = glycyl-tRNA(Gly) + AMP + diphosphate. In Xanthomonas campestris pv. campestris (strain 8004), this protein is Glycine--tRNA ligase alpha subunit.